Reading from the N-terminus, the 887-residue chain is Amyloid-beta-like protein (887 aa).

The signal sequence occupies residues 1–27 (MCAALRRNLLLRSLWVVLAIGTAQVQA). At 28-813 (ASPRWEPQIA…HAAKEGRNVY (786 aa)) the chain is on the extracellular side. The GFLD subdomain stretch occupies residues 30 to 133 (PRWEPQIAVL…KPFRCLGPFQ (104 aa)). Residues 30–199 (PRWEPQIAVL…SGVEFVCCPK (170 aa)) form the E1 domain. Intrachain disulfides connect C40/C70, C81/C128, C106/C116, C143/C197, C154/C184, and C168/C196. The interval 141–199 (EGCLFDHIHNASRCWPFVRWNQTGAAACQERGMQMRSFAMLLPCGISVFSGVEFVCCPK) is cuBD subdomain. N-linked (GlcNAc...) asparagine glycans are attached at residues N150 and N161. Disordered stretches follow at residues 225-365 (NDEL…STPQ) and 377-396 (NSGN…QPTS). N-linked (GlcNAc...) asparagine glycans are attached at residues N237 and N240. Positions 246-267 (NEDDLDDEDDLMGDDEEDDMVA) are enriched in acidic residues. The segment covering 268–292 (DEAATAGGSPNTGSSGDSNSGSLDD) has biased composition (low complexity). The segment covering 293 to 321 (INAEYDSGEEGDNYEEDGAGSESEAEVEA) has biased composition (acidic residues). Residues 329 to 352 (AKVVSLKSDSSSPSSAPVAPAPEK) show a composition bias toward low complexity. Residues 395–597 (TSDPYFTHFD…AKIAQLMNDY (203 aa)) form the E2 domain. Residue N574 is glycosylated (N-linked (GlcNAc...) asparagine). The tract at residues 675–743 (KSQVAEQQSQ…TEYGEATVSS (69 aa)) is disordered. Low complexity predominate over residues 681 to 699 (QQSQPTQSSTQSQAQQQQQ). Residues 814–834 (FTLSFAGIALMAAVFVGVAVA) form a helical membrane-spanning segment. Over 835–887 (KWRTSRSPHAQGFIEVDQNVTTHHPIVREEKIVPNMQINGYENPTYKYFEVKE) the chain is Cytoplasmic. The short motif at 875 to 880 (YENPTY) is the YENPXY motif element.

The protein belongs to the APP family. Interacts (via the intracellular domain, ICD) with APP-BP1. As to expression, expressed in postmitotic neurons in the central and peripheral nervous systems. Within the nervous system, transcripts are not observed in neuroblasts, newly generated neurons and at least one class of presumed glial cells.

It is found in the membrane. During development, plays a role in the regulation of the neddylation pathway. Appl and APP-BP1 interact antagonistically during development. The sequence is that of Amyloid-beta-like protein (Appl) from Drosophila melanogaster (Fruit fly).